The chain runs to 432 residues: Glutamine synthetase, chloroplastic (432 aa).

The region spanning 79–159 (IIAEYIWIGG…VICDTYTPQG (81 aa)) is the GS beta-grasp domain. The GS catalytic domain occupies 166–432 (KRHKAAQIFS…LAAQKLSLNV (267 aa)).

Belongs to the glutamine synthetase family. In terms of assembly, homooctamer.

The protein resides in the plastid. It localises to the chloroplast. It catalyses the reaction L-glutamate + NH4(+) + ATP = L-glutamine + ADP + phosphate + H(+). The light-modulated chloroplast enzyme, encoded by a nuclear gene and expressed primarily in leaves, is responsible for the reassimilation of the ammonia generated by photorespiration. The protein is Glutamine synthetase, chloroplastic (GLN2) of Daucus carota (Wild carrot).